The chain runs to 506 residues: Glutamate--tRNA ligase (506 aa).

The short motif at 23 to 33 (PSPTGTPHVGL) is the 'HIGH' region element. Residues 267 to 271 (KLSKR) carry the 'KMSKS' region motif. An ATP-binding site is contributed by K270.

The protein belongs to the class-I aminoacyl-tRNA synthetase family. Glutamate--tRNA ligase type 1 subfamily. Monomer.

The protein localises to the cytoplasm. It catalyses the reaction tRNA(Glu) + L-glutamate + ATP = L-glutamyl-tRNA(Glu) + AMP + diphosphate. Catalyzes the attachment of glutamate to tRNA(Glu) in a two-step reaction: glutamate is first activated by ATP to form Glu-AMP and then transferred to the acceptor end of tRNA(Glu). The polypeptide is Glutamate--tRNA ligase (Clavibacter sepedonicus (Clavibacter michiganensis subsp. sepedonicus)).